Reading from the N-terminus, the 436-residue chain is GTPase Der (436 aa).

2 EngA-type G domains span residues 4 to 167 and 176 to 351; these read PIVA…NKES and IRLS…ENHK. GTP is bound by residues 10–17, 57–61, 119–122, 182–189, 229–233, and 294–297; these read GKPNVGKS, DTGGI, NKVD, GRPNVGKS, DTAGM, and NKWD. Residues 352 to 436 form the KH-like domain; that stretch reads KRVQSSTLNE…PIHIIPRKRN (85 aa).

The protein belongs to the TRAFAC class TrmE-Era-EngA-EngB-Septin-like GTPase superfamily. EngA (Der) GTPase family. As to quaternary structure, associates with the 50S ribosomal subunit.

Its function is as follows. GTPase that plays an essential role in the late steps of ribosome biogenesis. This Staphylococcus epidermidis (strain ATCC 35984 / DSM 28319 / BCRC 17069 / CCUG 31568 / BM 3577 / RP62A) protein is GTPase Der.